The chain runs to 94 residues: Co-chaperonin GroES (94 aa).

It belongs to the GroES chaperonin family. As to quaternary structure, heptamer of 7 subunits arranged in a ring. Interacts with the chaperonin GroEL.

The protein localises to the cytoplasm. Functionally, together with the chaperonin GroEL, plays an essential role in assisting protein folding. The GroEL-GroES system forms a nano-cage that allows encapsulation of the non-native substrate proteins and provides a physical environment optimized to promote and accelerate protein folding. GroES binds to the apical surface of the GroEL ring, thereby capping the opening of the GroEL channel. This Streptococcus equinus (Streptococcus bovis) protein is Co-chaperonin GroES.